The following is a 467-amino-acid chain: H(+)/Cl(-) exchange transporter ClcA (467 aa).

Residues 1–30 (MKSQTIPTRRVRGFRRAAVIRQLLSRDKTP) are Cytoplasmic-facing. A helical transmembrane segment spans residues 31-67 (LTILLLASLTGVLAGLAGVAFEKAVAWVTAHRIEGLA). Residues 68 to 74 (QVAHIPW) lie on the Periplasmic side of the membrane. Residues 75–98 (LVWLLAFLFSALLAMVGYFLVRRF) form a helical membrane-spanning segment. Residues 99–106 (APEAGGSG) are Cytoplasmic-facing. The Selectivity filter part_1 motif lies at 104-108 (GSGIP). A chloride-binding site is contributed by Ser-105. An intramembrane region (helical) is located at residues 107–114 (IPEIEGAL). Topologically, residues 115–121 (EELRPVR) are cytoplasmic. A helical membrane pass occupies residues 122 to 139 (WWRVLPVKFFGGMGTLGA). Topologically, residues 140–145 (GMVLGR) are periplasmic. The Selectivity filter part_2 motif lies at 144-148 (GREGP). Residues 146-164 (EGPMVQMGGNIGRMVLDIF) traverse the membrane as a helical segment. The Cytoplasmic portion of the chain corresponds to 165 to 174 (HRPDAEARHT). 2 intramembrane regions (helical) span residues 175–187 (LLAT…LAAA) and 191–199 (PLAGILFII). The Cytoplasmic portion of the chain corresponds to 200 to 212 (EEMRTQFHYNLIS). Residues 213–230 (IKAVFTGVIMSTIVFRIF) form a helical membrane-spanning segment. Residues 231-250 (NGEKSVIEVGQLTDAPVYTL) lie on the Periplasmic side of the membrane. Residues 251-279 (WLYLLLGIIFGAVGPLFNRLVLGMQDVFA) traverse the membrane as a helical segment. Over 280–285 (RIHGGN) the chain is Cytoplasmic. The helical transmembrane segment at 286-307 (TTRWVLLGGAIGGACGLLALWE) threads the bilayer. The Periplasmic portion of the chain corresponds to 308-327 (PAAAGGGFGLIPIAAAGNFT). A helical membrane pass occupies residues 328-347 (VGMLLFIFIARVVTTVFCFS). The Cytoplasmic portion of the chain corresponds to 348-352 (SGAPG). Positions 353–357 (GIFAP) match the Selectivity filter part_3 motif. A helical transmembrane segment spans residues 353 to 374 (GIFAPMLALGTLLGSAFGMACA). Chloride contacts are provided by Ile-354 and Phe-355. Residues 375–384 (AWFPQWHLQA) are Periplasmic-facing. An intramembrane region (helical) is located at residues 385–399 (GTFAIAGMGALLAAS). Positions 400 to 402 (VRA) form an intramembrane region, note=Loop between two helices. The helical intramembrane region spans 403–414 (PITGIVLVLEMT). Positions 415–419 (DNYQL) form an intramembrane region, note=Loop between two helices. Residues 420–436 (ILPMIITCLGATLLAQF) traverse the membrane as a helical segment. The Cytoplasmic segment spans residues 437–467 (LGGKPLYSTILARTLAKQEAERQAQADGRNT). Residue Tyr-443 coordinates chloride.

Belongs to the chloride channel (TC 2.A.49) family. ClcA subfamily. As to quaternary structure, homodimer.

The protein localises to the cell inner membrane. The enzyme catalyses 2 chloride(in) + H(+)(out) = 2 chloride(out) + H(+)(in). In terms of biological role, proton-coupled chloride transporter. Functions as antiport system and exchanges two chloride ions for 1 proton. Probably acts as an electrical shunt for an outwardly-directed proton pump that is linked to amino acid decarboxylation, as part of the extreme acid resistance (XAR) response. In Cronobacter sakazakii (strain ATCC BAA-894) (Enterobacter sakazakii), this protein is H(+)/Cl(-) exchange transporter ClcA.